Consider the following 516-residue polypeptide: Keratin, type II cuticular Hb2 (516 aa).

Residues 1-118 (MSCRNFQLSP…PTVQRVKRDE (118 aa)) form a head region. Positions 118–429 (EKEQIKCLNN…RLLEGEEHRL (312 aa)) constitute an IF rod domain. Positions 119-153 (KEQIKCLNNRFASFINKVRFLEQKNKLLETKWNFM) are coil 1A. The interval 154–163 (QQQRSCQSNM) is linker 1. A coil 1B region spans residues 164–264 (EPLFEGYICA…FEEEIGLLQS (101 aa)). A linker 12 region spans residues 265 to 281 (QISETSVIVKMDNSREL). The segment at 282 to 425 (DVDGIVAEIK…ATYRRLLEGE (144 aa)) is coil 2. Residues 426 to 516 (EHRLCEGIGP…VGVGSNSCSR (91 aa)) are tail.

Belongs to the intermediate filament family. In terms of assembly, heterotetramer of two type I and two type II keratins.

The sequence is that of Keratin, type II cuticular Hb2 (Krt82) from Mus musculus (Mouse).